A 206-amino-acid polypeptide reads, in one-letter code: Large ribosomal subunit protein bL25 (206 aa).

The segment at 1–91 (MEYRLKAYYR…RPEHVDFFVL (91 aa)) is bL25 domain. Positions 92–206 (SDEPVEMYVP…IKKGKEEEEE (115 aa)) are CTC domain. The tract at residues 184-206 (AEEAAAEVAEPEVIKKGKEEEEE) is disordered. Positions 195–206 (EVIKKGKEEEEE) are enriched in basic and acidic residues.

The protein belongs to the bacterial ribosomal protein bL25 family. CTC subfamily. Part of the 50S ribosomal subunit. Contacts the 5S rRNA.

Its function is as follows. This is one of 3 proteins that mediate the attachment of the 5S rRNA onto the large ribosomal subunit. In Thermus thermophilus, this protein is Large ribosomal subunit protein bL25 (rplY).